Reading from the N-terminus, the 143-residue chain is MLKEFREFAMKGNVVDLAVGVIIGAAFGAIVTSMVGDLIMPVIGAVTGGLDFSNYFTPLSKAVTANSLAEAKKQGAVLAWGSFLTITLNFLIVAGVLFGVIRAMNRLKRNDEAVAASPPKPTREQELLTEIRDILKSGIRPQV.

A run of 2 helical transmembrane segments spans residues 19-39 and 81-101; these read VGVI…GDLI and GSFL…FGVI.

Belongs to the MscL family. As to quaternary structure, homopentamer.

It localises to the cell inner membrane. Functionally, channel that opens in response to stretch forces in the membrane lipid bilayer. May participate in the regulation of osmotic pressure changes within the cell. The sequence is that of Large-conductance mechanosensitive channel from Rhodopseudomonas palustris (strain BisB5).